We begin with the raw amino-acid sequence, 391 residues long: F-box only protein 5 (391 aa).

The 48-residue stretch at 198-245 (AELFHRDFKHLLTKILRHLSAMDLINVISVSTTWRKILQKDNSAYNSY) folds into the F-box domain. The segment at 318–366 (CLKVCVDCSSPAKYDPYLHRATCTRESCKFDFCTLCSCKYHGSKCCQTS) adopts a ZBR-type zinc-finger fold. 8 residues coordinate Zn(2+): Cys-322, Cys-325, Cys-340, Cys-345, Cys-350, Cys-353, His-358, and Cys-363. The segment at 365-391 (TSKPRSYRVPSEPLPGSKKSKQNLRRL) is disordered. Basic residues predominate over residues 382–391 (KKSKQNLRRL).

In terms of assembly, part of a SCF (SKP1-cullin-F-box) protein ligase complex. Interacts with btrc. Interacts with skp1. Interacts with cdc20. Interacts with pin1; stabilizes fbxo5 by preventing its association with btrc in an isomerization-dependent pathway; this interaction is present during G2 phase and prevents fbxo5 degradation. Interacts with plk1. Proteolysed; proteolysis is induced by both cyclin B-cdk1 and cyclin A-cdk1/2 complex through probable phosphorylation. Proteolysis is inhibited by pin1 during G2.

The protein localises to the nucleus. It localises to the cytoplasm. The protein resides in the cytoskeleton. Its subcellular location is the spindle. It is found in the microtubule organizing center. The protein localises to the centrosome. It functions in the pathway protein modification; protein ubiquitination. Regulates progression through early mitosis by inhibiting the anaphase promoting complex/cyclosome (APC). Binds to the APC activators cdc20 to prevent APC activation. Can also bind directly to the APC to inhibit substrate-binding. Required to arrest unfertilized eggs at metaphase of meiosis II, by preventing their release from metaphase of meiosis II, through inhibition of APC-dependent cyclin B destruction leading to stabilization of cyclin B-cdk1 complex activity. This is F-box only protein 5 from Xenopus tropicalis (Western clawed frog).